A 146-amino-acid polypeptide reads, in one-letter code: MCMKLKTITAAMLFGCLCAGAVYAAGEVEKREGMMKQIGGSMGALAAISKGEKPFDAAAVKAAVTTISTNAKAFPDQFPVGSETGSAAAPAIWENFDDFKAKAAKLGTDADAVLANLPTDQAGVATAMKTLGADCGTCHQTYRLKK.

The N-terminal stretch at Met1 to Ala24 is a signal peptide. Positions 35, 135, 138, and 139 each coordinate heme c.

In terms of assembly, monomer. In terms of processing, binds 1 heme c group covalently per subunit.

Functionally, low-spin monoheme cytochrome c. The chain is Cytochrome c-556 from Agrobacterium fabrum (strain C58 / ATCC 33970) (Agrobacterium tumefaciens (strain C58)).